Consider the following 448-residue polypeptide: Glutamyl-tRNA reductase 2 (448 aa).

Residues 50-53 (TCER), Ser109, 114-116 (ESD), and Gln120 contribute to the substrate site. Cys51 acts as the Nucleophile in catalysis. Residue 190 to 195 (GTGQVA) coordinates NADP(+). The tract at residues 423–448 (DQAVPAYSPQPIGNTSNAAASATPRR) is disordered. The segment covering 433 to 442 (PIGNTSNAAA) has biased composition (polar residues).

This sequence belongs to the glutamyl-tRNA reductase family. As to quaternary structure, homodimer.

It carries out the reaction (S)-4-amino-5-oxopentanoate + tRNA(Glu) + NADP(+) = L-glutamyl-tRNA(Glu) + NADPH + H(+). Its pathway is porphyrin-containing compound metabolism; protoporphyrin-IX biosynthesis; 5-aminolevulinate from L-glutamyl-tRNA(Glu): step 1/2. Its function is as follows. Catalyzes the NADPH-dependent reduction of glutamyl-tRNA(Glu) to glutamate 1-semialdehyde (GSA). This Nocardioides sp. (strain ATCC BAA-499 / JS614) protein is Glutamyl-tRNA reductase 2.